The chain runs to 246 residues: MEGWQRAFVIHARPYSETSLLLDFFTENEGRVRILSKGARGRRSPLKGALQPFTPLLIRWSGRGEIKTLRDAEPISLALPLTGTVLYSGLYLNELLSRVLENGTSYSTLFFEYLSCLQILAASETTPEAALRRFELALLTQLGYGLDFLHCAGSGEPVSDTMTYRYREEKGFIASLVVDHYSFTGLELKSLAKREFPTAGTLKAAKRFTRMALKPYLGGKPLKSRELFRQFAIKKCAKKSVLIEDK.

It belongs to the RecO family.

Functionally, involved in DNA repair and RecF pathway recombination. The chain is DNA repair protein RecO from Proteus mirabilis (strain HI4320).